We begin with the raw amino-acid sequence, 152 residues long: uncharacterized protein (152 aa).

The region spanning 3 to 143 (EQKLCQAINL…IIEIFTILKS (141 aa)) is the HTH marR-type domain. A DNA-binding region (H-T-H motif) is located at residues 55–78 (PGSLAMYQNVHKSAISNRLKKLLE).

This is an uncharacterized protein from Bacillus subtilis (strain 168).